The chain runs to 300 residues: Phospholipase A1 (300 aa).

Cys-4 and Cys-87 are disulfide-bonded. Catalysis depends on Ser-137, which acts as the Nucleophile. Asp-165 (charge relay system) is an active-site residue. 2 cysteine pairs are disulfide-bonded: Cys-176/Cys-181 and Cys-219/Cys-227. The active-site Charge relay system is the His-229. Disulfide bonds link Cys-244–Cys-268, Cys-245–Cys-293, and Cys-261–Cys-266.

It belongs to the AB hydrolase superfamily. Lipase family. In terms of tissue distribution, expressed by the venom gland.

Its subcellular location is the secreted. The enzyme catalyses a 1,2-diacyl-sn-glycero-3-phosphocholine + H2O = a 2-acyl-sn-glycero-3-phosphocholine + a fatty acid + H(+). Functionally, catalyzes the hydrolysis of phosphatidylcholine with phospholipase A1 activity. May act as an allergen and induce hemolytic activity. This Vespula maculifrons (Eastern yellow jacket) protein is Phospholipase A1.